The following is a 130-amino-acid chain: Lysozyme C (130 aa).

A C-type lysozyme domain is found at 2-130 (KVYGRCELAA…VNVWIRGCRL (129 aa)). Disulfide bonds link cysteine 7-cysteine 128, cysteine 31-cysteine 116, cysteine 65-cysteine 81, and cysteine 77-cysteine 95. Catalysis depends on residues glutamate 36 and aspartate 53.

The protein belongs to the glycosyl hydrolase 22 family. In terms of assembly, monomer.

The protein localises to the secreted. It carries out the reaction Hydrolysis of (1-&gt;4)-beta-linkages between N-acetylmuramic acid and N-acetyl-D-glucosamine residues in a peptidoglycan and between N-acetyl-D-glucosamine residues in chitodextrins.. In terms of biological role, lysozymes have primarily a bacteriolytic function; those in tissues and body fluids are associated with the monocyte-macrophage system and enhance the activity of immunoagents. This Phasianus versicolor (Green pheasant) protein is Lysozyme C (LYZ).